The primary structure comprises 79 residues: Potassium channel toxin Hge-beta-KTx (79 aa).

The signal sequence occupies residues 1-21 (MAKSFFAAFLIIMLISSLVDG). Residues 48-79 (EYMCPVVSSFCKQHCARLGKSGQCDLLECICS) enclose the BetaSPN-type CS-alpha/beta domain. Cystine bridges form between cysteine 51–cysteine 71, cysteine 58–cysteine 76, and cysteine 62–cysteine 78.

As to expression, expressed by the venom gland.

The protein resides in the secreted. In terms of biological role, the full peptide presents antibacterial and cytotoxic activities. The synthetic C-terminus (AA 33-76) inhibits voltage-gated potassium channels Kv1.1/KCNA1, Kv1.2/KCNA2, and Kv1.3/KCNA3. The chain is Potassium channel toxin Hge-beta-KTx from Hoffmannihadrurus gertschi (Scorpion).